The following is a 139-amino-acid chain: Small ribosomal subunit protein uS12 (139 aa).

The disordered stretch occupies residues 1 to 21 (MPTINQLVRKGRKAVQEKSTA). Position 102 is a 3-methylthioaspartic acid (D102).

Belongs to the universal ribosomal protein uS12 family. In terms of assembly, part of the 30S ribosomal subunit. Contacts proteins S8 and S17. May interact with IF1 in the 30S initiation complex.

With S4 and S5 plays an important role in translational accuracy. Its function is as follows. Interacts with and stabilizes bases of the 16S rRNA that are involved in tRNA selection in the A site and with the mRNA backbone. Located at the interface of the 30S and 50S subunits, it traverses the body of the 30S subunit contacting proteins on the other side and probably holding the rRNA structure together. The combined cluster of proteins S8, S12 and S17 appears to hold together the shoulder and platform of the 30S subunit. The polypeptide is Small ribosomal subunit protein uS12 (Alkaliphilus metalliredigens (strain QYMF)).